We begin with the raw amino-acid sequence, 123 residues long: Small ribosomal subunit protein uS12c (123 aa).

It belongs to the universal ribosomal protein uS12 family. Part of the 30S ribosomal subunit.

The protein resides in the plastid. Its subcellular location is the chloroplast. With S4 and S5 plays an important role in translational accuracy. Located at the interface of the 30S and 50S subunits. The chain is Small ribosomal subunit protein uS12c (rps12) from Marchantia polymorpha (Common liverwort).